A 511-amino-acid chain; its full sequence is Exodeoxyribonuclease 7 large subunit (511 aa).

It belongs to the XseA family. Heterooligomer composed of large and small subunits.

It localises to the cytoplasm. The catalysed reaction is Exonucleolytic cleavage in either 5'- to 3'- or 3'- to 5'-direction to yield nucleoside 5'-phosphates.. Its function is as follows. Bidirectionally degrades single-stranded DNA into large acid-insoluble oligonucleotides, which are then degraded further into small acid-soluble oligonucleotides. The polypeptide is Exodeoxyribonuclease 7 large subunit (Brucella suis biovar 1 (strain 1330)).